The chain runs to 286 residues: MAENTMWHETLHDQFGQYFAVDNVLYHEKTDHQDLIIFENAAFGRVMALDGVVQTTERDEFIYHEMMTHVPLLAHGHAKHVLIIGGGDGAMLREVTRHKNVETITMVEIDAGVVSFCRQYLPNHNAGSYDDPRFTLVIDDGVNFVNQTHQTFDVIISDCTDPIGPGESLFTSAFYEGCKRCLNPGGIFVAQNGVCFLQQDEALDSHRKLSHYFSDVGFYQAAIPTYYGGIMTFAWATDNDALRHLSSEIIQARFHAAGLKCRYYNSAIHAAAFALPQYLHDALSAQ.

In terms of domain architecture, PABS spans 5–238 (TMWHETLHDQ…GIMTFAWATD (234 aa)). Gln33 is an S-methyl-5'-thioadenosine binding site. Residues His64 and Asp88 each contribute to the spermidine site. S-methyl-5'-thioadenosine is bound by residues Glu108 and 140-141 (DG). The active-site Proton acceptor is Asp158. Residue 158–161 (DCTD) participates in spermidine binding. Residue Pro165 coordinates S-methyl-5'-thioadenosine.

This sequence belongs to the spermidine/spermine synthase family. In terms of assembly, homodimer or homotetramer.

It is found in the cytoplasm. The catalysed reaction is S-adenosyl 3-(methylsulfanyl)propylamine + putrescine = S-methyl-5'-thioadenosine + spermidine + H(+). Its pathway is amine and polyamine biosynthesis; spermidine biosynthesis; spermidine from putrescine: step 1/1. Its function is as follows. Catalyzes the irreversible transfer of a propylamine group from the amino donor S-adenosylmethioninamine (decarboxy-AdoMet) to putrescine (1,4-diaminobutane) to yield spermidine. The chain is Polyamine aminopropyltransferase from Salmonella typhi.